The primary structure comprises 468 residues: Chromosomal replication initiator protein DnaA (468 aa).

The tract at residues 1-84 (MSSSLWLQCL…RFEVGSKPIS (84 aa)) is domain I, interacts with DnaA modulators. The tract at residues 84–131 (SAPPRPQRTAADVAAATSAPAQMQARQSLHKPWESRGPEPVDDLNHRS) is domain II. The disordered stretch occupies residues 112–132 (LHKPWESRGPEPVDDLNHRSN). The span at 114–129 (KPWESRGPEPVDDLNH) shows a compositional bias: basic and acidic residues. Residues 132–348 (NVNPKHKFTN…GALNRVVANA (217 aa)) are domain III, AAA+ region. ATP is bound by residues G176, G178, K179, and T180. The tract at residues 349 to 468 (NFTGRAITID…YSNLIRTLSS (120 aa)) is domain IV, binds dsDNA.

This sequence belongs to the DnaA family. As to quaternary structure, oligomerizes as a right-handed, spiral filament on DNA at oriC.

It localises to the cytoplasm. Functionally, plays an essential role in the initiation and regulation of chromosomal replication. ATP-DnaA binds to the origin of replication (oriC) to initiate formation of the DNA replication initiation complex once per cell cycle. Binds the DnaA box (a 9 base pair repeat at the origin) and separates the double-stranded (ds)DNA. Forms a right-handed helical filament on oriC DNA; dsDNA binds to the exterior of the filament while single-stranded (ss)DNA is stabiized in the filament's interior. The ATP-DnaA-oriC complex binds and stabilizes one strand of the AT-rich DNA unwinding element (DUE), permitting loading of DNA polymerase. After initiation quickly degrades to an ADP-DnaA complex that is not apt for DNA replication. Binds acidic phospholipids. The protein is Chromosomal replication initiator protein DnaA of Aliivibrio salmonicida (strain LFI1238) (Vibrio salmonicida (strain LFI1238)).